Consider the following 210-residue polypeptide: Cytochrome c biogenesis ATP-binding export protein CcmA (210 aa).

In terms of domain architecture, ABC transporter spans 4 to 207 (LAVRDLAVAR…RQSRPAGFNE (204 aa)). 36–43 (GPNGIGKT) is an ATP binding site.

It belongs to the ABC transporter superfamily. CcmA exporter (TC 3.A.1.107) family. In terms of assembly, the complex is composed of two ATP-binding proteins (CcmA) and two transmembrane proteins (CcmB).

The protein resides in the cell inner membrane. The catalysed reaction is heme b(in) + ATP + H2O = heme b(out) + ADP + phosphate + H(+). In terms of biological role, part of the ABC transporter complex CcmAB involved in the biogenesis of c-type cytochromes; once thought to export heme, this seems not to be the case, but its exact role is uncertain. Responsible for energy coupling to the transport system. This is Cytochrome c biogenesis ATP-binding export protein CcmA from Paracoccus denitrificans (strain Pd 1222).